Here is a 663-residue protein sequence, read N- to C-terminus: Endopolyphosphatase (663 aa).

At 1-14 (MAVNEKDVGRKSRV) the chain is on the cytoplasmic side. Residues 15–35 (SVVLWVFIALGTLFLCKNAFT) form a helical; Signal-anchor for type II membrane protein membrane-spanning segment. The Vacuolar segment spans residues 36 to 663 (FSSESIHGLK…ISTGYEDERN (628 aa)). Residues asparagine 487 and asparagine 526 are each glycosylated (N-linked (GlcNAc...) asparagine). Positions 534 to 564 (SAEQNKKKKKKNGKPDKSIPRKKPDELPAGP) are disordered. Residues 546-559 (GKPDKSIPRKKPDE) are compositionally biased toward basic and acidic residues.

This sequence belongs to the endopolyphosphatase PPN1 family. A divalent metal cation is required as a cofactor. Post-translationally, processing by proteases in the vacuole may be required for activation.

Its subcellular location is the vacuole membrane. The catalysed reaction is [phosphate](n+1) + n H2O = (n+1) phosphate + n H(+). In terms of biological role, catalyzes the hydrolysis of inorganic polyphosphate (polyP) chains of many hundreds of phosphate residues into shorter lengths. The protein is Endopolyphosphatase (PPN1) of Candida glabrata (strain ATCC 2001 / BCRC 20586 / JCM 3761 / NBRC 0622 / NRRL Y-65 / CBS 138) (Yeast).